The primary structure comprises 475 residues: Probable 5'-adenylylsulfate reductase 1, chloroplastic (475 aa).

Residues methionine 1–serine 63 constitute a chloroplast transit peptide. The segment at alanine 72–glycine 327 is reductase domain. The region spanning histidine 341–arginine 475 is the Thioredoxin domain. Catalysis depends on nucleophile residues cysteine 393 and cysteine 396. A disulfide bond links cysteine 393 and cysteine 396.

Belongs to the APS reductase family. The cofactor is [4Fe-4S] cluster.

Its subcellular location is the plastid. The protein localises to the chloroplast. It catalyses the reaction glutathione disulfide + sulfite + AMP + 2 H(+) = adenosine 5'-phosphosulfate + 2 glutathione. Its function is as follows. Reduces sulfate for Cys biosynthesis. The polypeptide is Probable 5'-adenylylsulfate reductase 1, chloroplastic (APR1) (Oryza sativa subsp. japonica (Rice)).